The chain runs to 230 residues: uncharacterized protein (230 aa).

This is an uncharacterized protein from Aquifex aeolicus (strain VF5).